We begin with the raw amino-acid sequence, 284 residues long: MTDVPATFTQAECNGDKPPENGQQPITKISEELTDVDSPLPHYRVEPSLEGAPTKGSQEERRKLQGNMLLNSSMEEKILKENPEEKLFVVHKAITDLSLQETSADEMTFREGRQWEKIPLSGSNQEIRRQKERITEQPLKEEEDEDRKNKGHQAAEIEWLGFRKPSQADMLHSKHDEEQKVWDEEIDDDDDDNCNDDEDEVRVIEFKKKHEEVSQFKEEGDASEDSPLSSASSQAVTPDEQPTLGKKSDISRNAYSRYNTISYRKIRKGNTKQRIDEFESMMHL.

Positions 1–61 are disordered; sequence MTDVPATFTQ…APTKGSQEER (61 aa). Residue S73 is modified to Phosphoserine. Residues 108–251 form a disordered region; that stretch reads TFREGRQWEK…PTLGKKSDIS (144 aa). Basic and acidic residues-rich tracts occupy residues 126–140 and 171–183; these read EIRRQKERITEQPLK and LHSKHDEEQKVWD. Over residues 184–200 the composition is skewed to acidic residues; sequence EEIDDDDDDNCNDDEDE. Residues 201–220 show a composition bias toward basic and acidic residues; the sequence is VRVIEFKKKHEEVSQFKEEG. Residues S214, S226, S230, and S233 each carry the phosphoserine modification. Positions 225 to 235 are enriched in low complexity; the sequence is DSPLSSASSQA. Residue T237 is modified to Phosphothreonine. The segment at 265-284 is binds actin; that stretch reads KIRKGNTKQRIDEFESMMHL.

Binds actin.

The protein resides in the cytoplasm. It localises to the cytoskeleton. Plays a role in cytoskeletal rearrangements during the late wrapping and/or compaction phases of myelinogenesis as well as in maintenance and stability of myelin sheath in the adult. May play an important role in late-stage oligodendroglia maturation, myelin/Ranvier node formation during CNS development, and in the maintenance and plasticity of related structures in the mature CNS. This Pongo abelii (Sumatran orangutan) protein is Ermin (ERMN).